A 512-amino-acid chain; its full sequence is Chlorogenic acid esterase (512 aa).

Positions 1 to 18 (MLLRLCIIATLLVSHCVA) are cleaved as a signal peptide. N-linked (GlcNAc...) asparagine glycosylation is found at N47, N80, and N98. A disulfide bridge links C92 with C120. S230 (acyl-ester intermediate) is an active-site residue. N-linked (GlcNAc...) asparagine glycosylation occurs at N271. Residues C281 and C292 are joined by a disulfide bond. Residues N295, N322, and N328 are each glycosylated (N-linked (GlcNAc...) asparagine). Residue E351 is the Charge relay system of the active site. Residues N391 and N402 are each glycosylated (N-linked (GlcNAc...) asparagine). H416 serves as the catalytic Charge relay system. N474 carries an N-linked (GlcNAc...) asparagine glycan.

Belongs to the type-B carboxylesterase/lipase family.

It is found in the secreted. The enzyme catalyses chlorogenate + H2O = L-quinate + (E)-caffeate + H(+). Extracellular chlorogenic acid esterase that releases caffeic acid from chlorogenic acid (CGA) contained in natural substrates such as apple marc and coffee pulp. Shows no activity towards 5-O-p-coumaroyl quinic acid, another quinic ester derivative, and rosmarinic acid, another caffeic ester derivative. In Aspergillus niger, this protein is Chlorogenic acid esterase.